A 279-amino-acid chain; its full sequence is Phosphatidylglycerol--prolipoprotein diacylglyceryl transferase (279 aa).

7 helical membrane passes run 22 to 42 (SAHWYGLMYLIGFYFIMWSSI), 58 to 78 (ILYFSFLNALIGGRIGYVIFY), 89 to 109 (FIFKVWEGGMSFHGGLLGSII), 128 to 148 (FLVPLIPFGLGFGRIGNFING), 195 to 215 (ISQLYEMFLEGILLFIILNIF), 223 to 243 (GYMSGLFLILYGSFRIIAEFF), and 256 to 276 (YISLGQILSIPMILYGLILII). R141 contacts a 1,2-diacyl-sn-glycero-3-phospho-(1'-sn-glycerol).

It belongs to the Lgt family.

Its subcellular location is the cell membrane. The catalysed reaction is L-cysteinyl-[prolipoprotein] + a 1,2-diacyl-sn-glycero-3-phospho-(1'-sn-glycerol) = an S-1,2-diacyl-sn-glyceryl-L-cysteinyl-[prolipoprotein] + sn-glycerol 1-phosphate + H(+). It functions in the pathway protein modification; lipoprotein biosynthesis (diacylglyceryl transfer). Catalyzes the transfer of the diacylglyceryl group from phosphatidylglycerol to the sulfhydryl group of the N-terminal cysteine of a prolipoprotein, the first step in the formation of mature lipoproteins. The protein is Phosphatidylglycerol--prolipoprotein diacylglyceryl transferase of Wigglesworthia glossinidia brevipalpis.